Reading from the N-terminus, the 318-residue chain is Transcription factor zip-4 (318 aa).

Polar residues predominate over residues 1-13; the sequence is MYNYNYSRGNKSM. 4 disordered regions span residues 1-20, 147-205, 238-257, and 273-318; these read MYNY…PRFH, EKKP…TAAA, NNDA…LQKD, and ELQS…KSNY. Residues 173 to 190 show a composition bias toward acidic residues; sequence DYQEEGETSLSDNDESVD. A bZIP domain is found at 228 to 291; sequence EPIYKLKRAR…ERDQQLIKQL (64 aa). Positions 232 to 266 are basic motif; it reads KLKRARNNDAVRKSRNKAKELQLQKDEEYDEMKKR. A coiled-coil region spans residues 242–280; sequence VRKSRNKAKELQLQKDEEYDEMKKRITQLEAELQSEREG. The segment at 267–274 is leucine-zipper; that stretch reads ITQLEAEL. The segment covering 275–298 has biased composition (basic and acidic residues); the sequence is QSEREGRERDQQLIKQLIREKEST. The segment covering 307-318 has biased composition (polar residues); the sequence is RNALESFNKSNY.

This sequence belongs to the bZIP family. C/EBP subfamily.

The protein localises to the nucleus. Functionally, transcription factor that binds to the promoter and the enhancer regions of target genes. Involved in responding to mitochondrial damage. Has a protective role in response to infection by the Gram-negative bacterium P.aeruginosa. The sequence is that of Transcription factor zip-4 from Caenorhabditis elegans.